Consider the following 341-residue polypeptide: Basic membrane protein B (341 aa).

An N-terminal signal peptide occupies residues Met-1–Ser-14. Cys-15 carries the N-palmitoyl cysteine lipid modification. Cys-15 is lipidated: S-diacylglycerol cysteine.

It belongs to the BMP lipoprotein family. Monomer.

Its subcellular location is the cell inner membrane. In terms of biological role, may be part of an ABC-type nucleoside uptake system involved in the purine salvage pathway. This is Basic membrane protein B (bmpB) from Borreliella burgdorferi (strain ATCC 35210 / DSM 4680 / CIP 102532 / B31) (Borrelia burgdorferi).